A 284-amino-acid polypeptide reads, in one-letter code: Ribose-phosphate pyrophosphokinase (284 aa).

Residues aspartate 34–glutamate 36 and arginine 92–glutamine 93 each bind ATP. Positions 125 and 163 each coordinate Mg(2+). Residue lysine 186 is part of the active site. Residues arginine 188, aspartate 212, and serine 216 to threonine 220 contribute to the D-ribose 5-phosphate site.

This sequence belongs to the ribose-phosphate pyrophosphokinase family. Class III (archaeal) subfamily. In terms of assembly, homotetramer. It depends on Mg(2+) as a cofactor.

Its subcellular location is the cytoplasm. The enzyme catalyses D-ribose 5-phosphate + ATP = 5-phospho-alpha-D-ribose 1-diphosphate + AMP + H(+). The protein operates within metabolic intermediate biosynthesis; 5-phospho-alpha-D-ribose 1-diphosphate biosynthesis; 5-phospho-alpha-D-ribose 1-diphosphate from D-ribose 5-phosphate (route I): step 1/1. Activated by inorganic phosphate, with a maximal activity at 190 mM. Above this concentration inorganic phosphate progressively inhibits the kinase. Completely inhibited by ADP, and partially inhibited by alpha,beta-methylene ATP (mATP). Lack of allosteric regulation. Functionally, involved in the biosynthesis of the central metabolite phospho-alpha-D-ribosyl-1-pyrophosphate (PRPP) via the transfer of pyrophosphoryl group from ATP to 1-hydroxyl of ribose-5-phosphate (Rib-5-P). It can also use dATP as diphosphoryl donor. This Methanocaldococcus jannaschii (strain ATCC 43067 / DSM 2661 / JAL-1 / JCM 10045 / NBRC 100440) (Methanococcus jannaschii) protein is Ribose-phosphate pyrophosphokinase.